The sequence spans 571 residues: Cerebral cavernous malformations 2 protein-like (571 aa).

3 disordered regions span residues 164-193 (AGVD…GTAE), 212-295 (AEAR…PQDP), and 544-571 (LAPD…DNYL). A compositionally biased stretch (basic and acidic residues) spans 184 to 193 (PEKRRVGTAE). Gly residues predominate over residues 212 to 223 (AEARAGGGGGGS). Residues 237–251 (WERRQTFSGSWERRH) are compositionally biased toward basic and acidic residues. Over residues 253 to 264 (GGGGGGGAGKPG) the composition is skewed to gly residues. Residues 286–295 (GPNPLDPQDP) show a composition bias toward pro residues. Residues 545 to 555 (APDDDDDDEDE) are compositionally biased toward acidic residues.

It belongs to the CCM2 family.

The sequence is that of Cerebral cavernous malformations 2 protein-like (CCM2L) from Homo sapiens (Human).